Consider the following 140-residue polypeptide: L-fucose mutarotase (140 aa).

His22 functions as the Proton donor in the catalytic mechanism. Substrate-binding positions include Asp30, Arg107, and 129–131 (YGN).

Belongs to the RbsD / FucU family. FucU mutarotase subfamily. Homodecamer.

Its subcellular location is the cytoplasm. It carries out the reaction alpha-L-fucose = beta-L-fucose. It functions in the pathway carbohydrate metabolism; L-fucose metabolism. Involved in the anomeric conversion of L-fucose. The polypeptide is L-fucose mutarotase (Salmonella gallinarum (strain 287/91 / NCTC 13346)).